We begin with the raw amino-acid sequence, 117 residues long: Putative membrane protein insertion efficiency factor (117 aa).

This sequence belongs to the UPF0161 family.

It is found in the cell inner membrane. Its function is as follows. Could be involved in insertion of integral membrane proteins into the membrane. The protein is Putative membrane protein insertion efficiency factor of Bartonella bacilliformis (strain ATCC 35685 / KC583 / Herrer 020/F12,63).